The following is a 215-amino-acid chain: Peroxiredoxin 1 (215 aa).

Residues 1-157 (MKLYQKFPET…LLRITKAALV (157 aa)) form the Thioredoxin domain. Residue Cys-45 is the Cysteine sulfenic acid (-SOH) intermediate of the active site. Arg-120 serves as a coordination point for substrate.

Belongs to the peroxiredoxin family. Prx6 subfamily. In terms of assembly, homodecamer. Pentamer of dimers that assemble into a ring structure.

It is found in the cytoplasm. It catalyses the reaction a hydroperoxide + [thioredoxin]-dithiol = an alcohol + [thioredoxin]-disulfide + H2O. Thiol-specific peroxidase that catalyzes the reduction of hydrogen peroxide and organic hydroperoxides to water and alcohols, respectively. Plays a role in cell protection against oxidative stress by detoxifying peroxides. The polypeptide is Peroxiredoxin 1 (Sulfuracidifex metallicus (Sulfolobus metallicus)).